Reading from the N-terminus, the 496-residue chain is Glycerol kinase (496 aa).

Thr12 is an ADP binding site. ATP-binding residues include Thr12, Thr13, and Ser14. Thr12 contacts sn-glycerol 3-phosphate. Arg16 lines the ADP pocket. The sn-glycerol 3-phosphate site is built by Arg82, Glu83, and Tyr134. Arg82, Glu83, and Tyr134 together coordinate glycerol. His230 bears the Phosphohistidine; by HPr mark. Asp244 is a sn-glycerol 3-phosphate binding site. Glycerol is bound by residues Asp244 and Gln245. ADP-binding residues include Thr266 and Gly309. ATP-binding residues include Thr266, Gly309, Gln313, and Gly410. ADP is bound by residues Gly410 and Asn414.

It belongs to the FGGY kinase family. In terms of assembly, homotetramer and homodimer (in equilibrium). Post-translationally, the phosphoenolpyruvate-dependent sugar phosphotransferase system (PTS), including enzyme I, and histidine-containing protein (HPr) are required for the phosphorylation, which leads to the activation of the enzyme.

It carries out the reaction glycerol + ATP = sn-glycerol 3-phosphate + ADP + H(+). Its pathway is polyol metabolism; glycerol degradation via glycerol kinase pathway; sn-glycerol 3-phosphate from glycerol: step 1/1. With respect to regulation, activated by phosphorylation and inhibited by fructose 1,6-bisphosphate (FBP). Functionally, key enzyme in the regulation of glycerol uptake and metabolism. Catalyzes the phosphorylation of glycerol to yield sn-glycerol 3-phosphate. This Geobacillus kaustophilus (strain HTA426) protein is Glycerol kinase.